The chain runs to 303 residues: DnaJ homolog subfamily C member 17 (303 aa).

The J domain occupies 11-76 (DLYALLGIEE…AARAAYDKVR (66 aa)). Disordered regions lie at residues 104–123 (ERQAQAHGSEEEEESRSATT) and 150–170 (IRQDREQRLRGRTENTEGKGT). Serine 112 carries the post-translational modification Phosphoserine. Residues 150-166 (IRQDREQRLRGRTENTE) show a composition bias toward basic and acidic residues. Positions 178 to 249 (KCKKEDESQG…NPLKVSWLEG (72 aa)) constitute an RRM domain. Residue lysine 264 is modified to N6-methyllysine.

Expressed in the thyroid gland.

Its subcellular location is the cytoplasm. The protein resides in the nucleus. In terms of biological role, may negatively affect PAX8-induced thyroglobulin/TG transcription. This chain is DnaJ homolog subfamily C member 17 (Dnajc17), found in Mus musculus (Mouse).